A 496-amino-acid polypeptide reads, in one-letter code: Probable cytosol aminopeptidase (496 aa).

Residues Lys266 and Asp271 each contribute to the Mn(2+) site. Lys278 is an active-site residue. Asp289, Asp348, and Glu350 together coordinate Mn(2+). Arg352 is a catalytic residue.

It belongs to the peptidase M17 family. Mn(2+) serves as cofactor.

It localises to the cytoplasm. It carries out the reaction Release of an N-terminal amino acid, Xaa-|-Yaa-, in which Xaa is preferably Leu, but may be other amino acids including Pro although not Arg or Lys, and Yaa may be Pro. Amino acid amides and methyl esters are also readily hydrolyzed, but rates on arylamides are exceedingly low.. The enzyme catalyses Release of an N-terminal amino acid, preferentially leucine, but not glutamic or aspartic acids.. Its function is as follows. Presumably involved in the processing and regular turnover of intracellular proteins. Catalyzes the removal of unsubstituted N-terminal amino acids from various peptides. The chain is Probable cytosol aminopeptidase from Pseudomonas fluorescens (strain Pf0-1).